A 185-amino-acid polypeptide reads, in one-letter code: Elongation factor P (185 aa).

The protein belongs to the elongation factor P family.

It is found in the cytoplasm. Its pathway is protein biosynthesis; polypeptide chain elongation. Involved in peptide bond synthesis. Stimulates efficient translation and peptide-bond synthesis on native or reconstituted 70S ribosomes in vitro. Probably functions indirectly by altering the affinity of the ribosome for aminoacyl-tRNA, thus increasing their reactivity as acceptors for peptidyl transferase. The sequence is that of Elongation factor P from Streptococcus equi subsp. zooepidemicus (strain MGCS10565).